A 416-amino-acid polypeptide reads, in one-letter code: Choline/ethanolaminephosphotransferase 1 (416 aa).

The segment at 1 to 20 (MSGHRSTRKRCGDSHPESPV) is disordered. At Ser18 the chain carries Phosphoserine. At Thr40 the chain carries Phosphothreonine. Asn86 provides a ligand contact to CDP-choline. The next 2 membrane-spanning stretches (helical) occupy residues 89 to 108 (TIIG…FYCP) and 116 to 133 (LWAY…QSLD). Asp133 is a Mg(2+) binding site. Asn144 carries N-linked (GlcNAc...) asparagine glycosylation. Glu151 is a binding site for CDP-choline. Asp154 contributes to the Mg(2+) binding site. His155 (proton acceptor) is an active-site residue. Transmembrane regions (helical) follow at residues 156 to 176 (GCDS…VQLG), 180 to 199 (DWMF…AHWQ), 210 to 230 (IIDV…AVIG), 246 to 267 (MKLL…NYFR), 286 to 306 (VLSP…IYKK), 315 to 334 (HPCL…TNKL), 349 to 363 (TAFI…DQYF), and 368 to 388 (DEYI…IRYC). Asp158 contacts Mg(2+).

Belongs to the CDP-alcohol phosphatidyltransferase class-I family. In terms of assembly, homodimer. Mg(2+) serves as cofactor. The cofactor is Mn(2+).

The protein localises to the endoplasmic reticulum membrane. It localises to the nucleus membrane. It catalyses the reaction CDP-ethanolamine + a 1,2-diacyl-sn-glycerol = a 1,2-diacyl-sn-glycero-3-phosphoethanolamine + CMP + H(+). The catalysed reaction is CDP-choline + a 1,2-diacyl-sn-glycerol = a 1,2-diacyl-sn-glycero-3-phosphocholine + CMP + H(+). The enzyme catalyses 1-O-alkyl-2-acyl-sn-glycerol + CDP-choline = a 1-O-alkyl-2-acyl-sn-glycero-3-phosphocholine + CMP + H(+). It carries out the reaction a 1-O-(1Z-alkenyl)-2-acyl-sn-glycerol + CDP-choline = a 1-O-(1Z-alkenyl)-2-acyl-sn-glycero-3-phosphocholine + CMP + H(+). It catalyses the reaction 1,2-dioctanoyl-sn-glycerol + CDP-choline = 1,2-dioctanoyl-sn-glycero-3-phosphocholine + CMP + H(+). The catalysed reaction is 1,2-didecanoyl-sn-glycerol + CDP-choline = 1,2-didecanoyl-sn-glycero-3-phosphocholine + CMP + H(+). The enzyme catalyses CDP-choline + 1,2-di-(9Z-octadecenoyl)-sn-glycerol = 1,2-di-(9Z-octadecenoyl)-sn-glycero-3-phosphocholine + CMP + H(+). It carries out the reaction 1-hexadecanoyl-2-(9Z-octadecenoyl)-sn-glycerol + CDP-choline = 1-hexadecanoyl-2-(9Z-octadecenoyl)-sn-glycero-3-phosphocholine + CMP + H(+). It catalyses the reaction CDP-ethanolamine + 1,2-di-(9Z-octadecenoyl)-sn-glycerol = 1,2-di-(9Z-octadecenoyl)-sn-glycero-3-phosphoethanolamine + CMP + H(+). The catalysed reaction is 1-hexadecanoyl-2-(9Z-octadecenoyl)-sn-glycerol + CDP-ethanolamine = 1-hexadecanoyl-2-(9Z-octadecenoyl)-sn-glycero-3-phosphoethanolamine + CMP + H(+). The enzyme catalyses 1-hexadecanoyl-2-(4Z,7Z,10Z,13Z,16Z,19Z-docosahexaenoyl)-sn-glycerol + CDP-choline = 1-hexadecanoyl-2-(4Z,7Z,10Z,13Z,16Z,19Z-docosahexaenoyl)-sn-glycero-3-phosphocholine + CMP + H(+). It carries out the reaction 1,2-di-(9Z-hexadecenoyl)-sn-glycerol + CDP-choline = 1,2-di-(9Z-hexadecenoyl)-sn-glycero-3-phosphocholine + CMP + H(+). It catalyses the reaction 1,2-di-(9Z-hexadecenoyl)-sn-glycerol + CDP-ethanolamine = 1,2-di-(9Z-hexadecenoyl)-sn-glycero-3-phosphoethanolamine + CMP + H(+). The catalysed reaction is 1-O-hexadecyl-2-acetyl-sn-glycerol + CDP-choline = 1-O-hexadecyl-2-acetyl-sn-glycero-3-phosphocholine + CMP + H(+). The enzyme catalyses 1-O-hexadecyl-2-(5Z,8Z,11Z,14Z-eicosatetraenoyl)-sn-glycerol + CDP-choline = 1-O-hexadecyl-2-(5Z,8Z,11Z,14Z)-eicosatetraenoyl-sn-glycero-3-phosphocholine + CMP + H(+). The protein operates within phospholipid metabolism; phosphatidylethanolamine biosynthesis; phosphatidylethanolamine from ethanolamine: step 3/3. Its pathway is phospholipid metabolism; phosphatidylcholine biosynthesis; phosphatidylcholine from phosphocholine: step 2/2. Its function is as follows. Catalyzes both phosphatidylcholine and phosphatidylethanolamine biosynthesis from CDP-choline and CDP-ethanolamine, respectively. Involved in protein-dependent process of phospholipid transport to distribute phosphatidyl choline to the lumenal surface. Has a higher cholinephosphotransferase activity than ethanolaminephosphotransferase activity. The chain is Choline/ethanolaminephosphotransferase 1 from Mus musculus (Mouse).